Reading from the N-terminus, the 173-residue chain is NADH-quinone oxidoreductase subunit B (173 aa).

Residues Cys46, Cys47, Cys112, and Cys142 each contribute to the [4Fe-4S] cluster site.

It belongs to the complex I 20 kDa subunit family. In terms of assembly, NDH-1 is composed of 14 different subunits. Subunits NuoB, C, D, E, F, and G constitute the peripheral sector of the complex. [4Fe-4S] cluster is required as a cofactor.

Its subcellular location is the cell membrane. The enzyme catalyses a quinone + NADH + 5 H(+)(in) = a quinol + NAD(+) + 4 H(+)(out). Functionally, NDH-1 shuttles electrons from NADH, via FMN and iron-sulfur (Fe-S) centers, to quinones in the respiratory chain. The immediate electron acceptor for the enzyme in this species is believed to be a menaquinone. Couples the redox reaction to proton translocation (for every two electrons transferred, four hydrogen ions are translocated across the cytoplasmic membrane), and thus conserves the redox energy in a proton gradient. The polypeptide is NADH-quinone oxidoreductase subunit B (Desulfitobacterium hafniense (strain DSM 10664 / DCB-2)).